We begin with the raw amino-acid sequence, 534 residues long: Acetyltransferase MATC1 (534 aa).

Residues His-186 and Asp-459 each act as proton acceptor in the active site.

This sequence belongs to the plant acyltransferase family.

It localises to the cell membrane. Its pathway is secondary metabolite biosynthesis. Its function is as follows. Acetyltransferase; part of the gene cluster that mediates the biosynthesis of mannosylerythritol lipids (MELs), surface-active substances that enhance the availability of water-insoluble substrates. Mannosylerythritol lipid production is responsible for hemolytic activity of Ustilago maydis. Depending on the number of acetyl groups, mannosylerythritol lipids can be differentiated into MEL A (fully acetylated), MEL B and MEL C (monoacetylated at R-6 and R-4, respectively), and the fully deacetylated MEL D. The first step in the pathway is the generation of mannosylerythritol by the glycosyltransferase EMT1 which catalyzes the transfer of GDP-mannose to the C-4 atom of meso-erythritol. This reaction has to be stereospecific, since only mannosyl-D-erythritol is generated. The produced disaccharide is subsequently acylated with fatty acids of various lengths derived from the peroxisomal beta-oxidation by the peroxisomal acyltransferases MAC1 and MAC2 at positions C-2 and C-3, repectively. The existence of MEL derivatives which carry an acetyl group at C-2 implies that at least MAC1 also accepts acetyl-CoA as a donor. The final step of MEL biosynthesis is the acetylation of the fully acylated mannosylerythritol lipids catalyzed by the acetyl-CoA-dependent acetyltransferase MAT1. MAT1 displays a relaxed regioselectivity and is able to transfer acetylgroups to both positions C-4 and C-6 of the mannosyl moiety. The sequence is that of Acetyltransferase MATC1 from Mycosarcoma maydis (Corn smut fungus).